We begin with the raw amino-acid sequence, 326 residues long: Photosystem II assembly factor Ycf39 (326 aa).

The protein belongs to the NmrA-type oxidoreductase family. Ycf39 subfamily. In terms of assembly, purified in several chlorophyll- and carotenoid-containing complexes, including photosystem II (PSII) assembly intermediate complex RCII* (iD1, D1, D2, PsbE, PsbF, PsbI, Ycf39, Ycf48, HliC and HliD) and the Ycf39-Hlip complex (Ycf39, HliC, HliD and pigments). Tagged protein does not pull down mature PSII.

The protein resides in the cellular thylakoid membrane. Its function is as follows. Requires HliD to bind pigments. The Ycf39-Hlip complex binds D1 at an early stage of PSII assembly along with Ycf48, ribosomes and ChlG, the last enzyme in chlorophyll biosynthesis; it may be involved in chlorophyll reuse and delivery to D1 in the initial stages of PSII assembly. The Ycf39-Hlip complex efficiently quenches chlorophyll fluorescence, contributing to photoprotection. In Synechocystis sp. (strain ATCC 27184 / PCC 6803 / Kazusa), this protein is Photosystem II assembly factor Ycf39.